The chain runs to 283 residues: Acetylglutamate kinase (283 aa).

Substrate-binding positions include 63 to 64, arginine 85, and asparagine 178; that span reads GG.

It belongs to the acetylglutamate kinase family. ArgB subfamily.

Its subcellular location is the cytoplasm. The enzyme catalyses N-acetyl-L-glutamate + ATP = N-acetyl-L-glutamyl 5-phosphate + ADP. It participates in amino-acid biosynthesis; L-arginine biosynthesis; N(2)-acetyl-L-ornithine from L-glutamate: step 2/4. In terms of biological role, catalyzes the ATP-dependent phosphorylation of N-acetyl-L-glutamate. This is Acetylglutamate kinase from Prochlorococcus marinus (strain MIT 9312).